Consider the following 156-residue polypeptide: Small ribosomal subunit protein uS7cz/uS7cy (156 aa).

This sequence belongs to the universal ribosomal protein uS7 family. Part of the 30S ribosomal subunit.

It localises to the plastid. The protein localises to the chloroplast. Its function is as follows. One of the primary rRNA binding proteins, it binds directly to 16S rRNA where it nucleates assembly of the head domain of the 30S subunit. In Saccharum hybrid (Sugarcane), this protein is Small ribosomal subunit protein uS7cz/uS7cy (rps7-A).